The primary structure comprises 251 residues: Transmembrane ascorbate-dependent reductase CYB561 (251 aa).

Methionine 1 is subject to N-acetylmethionine. Over 1-16 (MEGGAAASTPAALPYY) the chain is Cytoplasmic. A helical membrane pass occupies residues 17 to 37 (VAFSQLLGLTLVAMTGAWLGL). A Cytochrome b561 domain is found at 19–220 (FSQLLGLTLV…FGGAVLYILT (202 aa)). At 38-51 (YRGGIAWESDLQFN) the chain is on the vesicular side. A helical membrane pass occupies residues 52–72 (AHPLCMVIGLIFLQGDALLVY). 3 residues coordinate heme b: histidine 53, arginine 73, and lysine 80. The Cytoplasmic segment spans residues 73–85 (RVFRNEAKRTTKV). The L-ascorbate site is built by lysine 80 and lysine 84. A helical membrane pass occupies residues 86 to 106 (LHGLLHIFALVIALVGLVAVF). Heme b is bound by residues histidine 87, 116–119 (DLYS), and histidine 121. Over 107 to 124 (DYHRKEGYADLYSLHSWC) the chain is Vesicular. A helical transmembrane segment spans residues 125 to 145 (GILVFVLYFVQWLVGFSFFLF). Residues 146-158 (PGASFSLRSRYRP) are Cytoplasmic-facing. Arginine 153 lines the L-ascorbate pocket. Residues 159–179 (QHIFFGATIFLLSVGTALLGL) traverse the membrane as a helical segment. Heme b contacts are provided by histidine 160 and glutamate 181. At 180 to 198 (KEALLFKLRDKYSAFEPEG) the chain is on the vesicular side. Residues 199–219 (VLANVLGLLLACFGGAVLYIL) traverse the membrane as a helical segment. Topologically, residues 220-251 (TRADWKRPSQAEEQALSMDFKTLTEGDSPGSQ) are cytoplasmic. Lysine 225 is a binding site for heme b. Serine 247 bears the Phosphoserine mark.

It depends on heme b as a cofactor.

The protein resides in the cytoplasmic vesicle. It localises to the secretory vesicle. The protein localises to the chromaffin granule membrane. The catalysed reaction is monodehydro-L-ascorbate radical(out) + L-ascorbate(in) = monodehydro-L-ascorbate radical(in) + L-ascorbate(out). In terms of biological role, transmembrane reductase that uses ascorbate as an electron donor in the cytoplasm and transfers electrons across membranes to reduce monodehydro-L-ascorbate radical in the lumen of secretory vesicles. It is therefore involved the regeneration and homeostasis within secretory vesicles of ascorbate which in turn provides reducing equivalents needed to support the activity of intravesicular enzymes. In Pongo abelii (Sumatran orangutan), this protein is Transmembrane ascorbate-dependent reductase CYB561 (CYB561).